The following is a 383-amino-acid chain: F-box/kelch-repeat protein At1g16250 (383 aa).

The F-box domain occupies 7–54; it reads SIIPGLPDDLALRCIAKLSHGYHGVLECVSRGWRDLVRGADYSCYKAR. Kelch repeat units follow at residues 50–103, 109–165, 166–214, 216–263, and 318–377; these read CYKA…GFAC, CLLV…SVSG, KVYV…SYRG, FHVL…VMKN, and ELYV…CVSL.

The protein is F-box/kelch-repeat protein At1g16250 of Arabidopsis thaliana (Mouse-ear cress).